Consider the following 396-residue polypeptide: L-aspartate--glyoxylate aminotransferase (396 aa).

Lys196 is modified (N6-(pyridoxal phosphate)lysine).

Belongs to the class-V pyridoxal-phosphate-dependent aminotransferase family. Pyridoxal 5'-phosphate is required as a cofactor.

The catalysed reaction is oxaloacetate + glycine = glyoxylate + L-aspartate. Functionally, catalyzes the transamination of glyoxylate into glycine using L-aspartate as the preferred amino group donor. Is essential for the growth of P.denitrificans in the presence of glycolate and glyoxylate since it functions in glyoxylate assimilation via the beta-hydroxyaspartate cycle (BHAC). Can catalyze the reverse reaction in vitro, and also use L-serine and L-glutamate as amino group donor, but with much less efficiency than L-aspartate. This chain is L-aspartate--glyoxylate aminotransferase, found in Paracoccus denitrificans (strain Pd 1222).